A 112-amino-acid chain; its full sequence is Large ribosomal subunit protein eL30 (112 aa).

The protein belongs to the eukaryotic ribosomal protein eL30 family. As to expression, expressed in roots and leaves.

The chain is Large ribosomal subunit protein eL30 from Triticum aestivum (Wheat).